Reading from the N-terminus, the 988-residue chain is Kinesin-like protein CIN8 (988 aa).

A Kinesin motor domain is found at 33 to 470; sequence NILVAVRCRG…LEYASKAKNI (438 aa). 125–132 is an ATP binding site; it reads GMTSTGKT. The segment at 206–301 is disordered; sequence FDSNVNGTSA…NSNNTNQQQS (96 aa). Residues 208–237 show a composition bias toward low complexity; it reads SNVNGTSASGSSSRSSSRNNSPRSAPDNSR. Residues 248-280 are compositionally biased toward polar residues; it reads HNTTGNSKISNNNHNKFSRFKQTSQESTRAHAS. Residues 281–301 are compositionally biased toward low complexity; the sequence is NNHQNVHIPNNNSNNTNQQQS. Coiled-coil stretches lie at residues 514-619 and 707-769; these read EHYK…ELQQ and KLAE…MQNF. The span at 965–974 shows a compositional bias: basic and acidic residues; that stretch reads ALQEKRKPED. Residues 965–988 form a disordered region; the sequence is ALQEKRKPEDEVLLQAKLQRRNPD.

It belongs to the TRAFAC class myosin-kinesin ATPase superfamily. Kinesin family. BimC subfamily.

The protein localises to the cytoplasm. It localises to the cytoskeleton. The protein resides in the spindle. Functionally, elongates the mitotic spindle by interacting with spindle microtubules to generate an outward force pushing spindle poles apart. Following spindle assembly, CIN8 and KIP1 apparently act to oppose a force, possibly generated by KAR3, that draws separated poles back together. The protein is Kinesin-like protein CIN8 (CIN8) of Candida glabrata (strain ATCC 2001 / BCRC 20586 / JCM 3761 / NBRC 0622 / NRRL Y-65 / CBS 138) (Yeast).